We begin with the raw amino-acid sequence, 386 residues long: Erythronate-4-phosphate dehydrogenase (386 aa).

Residues serine 59 and threonine 81 each contribute to the substrate site. Aspartate 162 is an NAD(+) binding site. Arginine 239 is a catalytic residue. Position 262 (aspartate 262) interacts with NAD(+). Glutamate 267 is a catalytic residue. Catalysis depends on histidine 284, which acts as the Proton donor. Glycine 287 lines the NAD(+) pocket. Position 288 (tyrosine 288) interacts with substrate.

This sequence belongs to the D-isomer specific 2-hydroxyacid dehydrogenase family. PdxB subfamily. As to quaternary structure, homodimer.

The protein localises to the cytoplasm. It carries out the reaction 4-phospho-D-erythronate + NAD(+) = (R)-3-hydroxy-2-oxo-4-phosphooxybutanoate + NADH + H(+). Its pathway is cofactor biosynthesis; pyridoxine 5'-phosphate biosynthesis; pyridoxine 5'-phosphate from D-erythrose 4-phosphate: step 2/5. Its function is as follows. Catalyzes the oxidation of erythronate-4-phosphate to 3-hydroxy-2-oxo-4-phosphonooxybutanoate. The protein is Erythronate-4-phosphate dehydrogenase of Psychrobacter cryohalolentis (strain ATCC BAA-1226 / DSM 17306 / VKM B-2378 / K5).